The following is a 429-amino-acid chain: Histidine--tRNA ligase (429 aa).

The protein belongs to the class-II aminoacyl-tRNA synthetase family. In terms of assembly, homodimer.

Its subcellular location is the cytoplasm. The enzyme catalyses tRNA(His) + L-histidine + ATP = L-histidyl-tRNA(His) + AMP + diphosphate + H(+). The protein is Histidine--tRNA ligase of Escherichia fergusonii (strain ATCC 35469 / DSM 13698 / CCUG 18766 / IAM 14443 / JCM 21226 / LMG 7866 / NBRC 102419 / NCTC 12128 / CDC 0568-73).